The sequence spans 433 residues: Methylenetetrahydrofolate--tRNA-(uracil-5-)-methyltransferase TrmFO (433 aa).

8-13 contributes to the FAD binding site; that stretch reads GAGLAG.

Belongs to the MnmG family. TrmFO subfamily. The cofactor is FAD.

The protein resides in the cytoplasm. It carries out the reaction uridine(54) in tRNA + (6R)-5,10-methylene-5,6,7,8-tetrahydrofolate + NADH + H(+) = 5-methyluridine(54) in tRNA + (6S)-5,6,7,8-tetrahydrofolate + NAD(+). It catalyses the reaction uridine(54) in tRNA + (6R)-5,10-methylene-5,6,7,8-tetrahydrofolate + NADPH + H(+) = 5-methyluridine(54) in tRNA + (6S)-5,6,7,8-tetrahydrofolate + NADP(+). Functionally, catalyzes the folate-dependent formation of 5-methyl-uridine at position 54 (M-5-U54) in all tRNAs. This is Methylenetetrahydrofolate--tRNA-(uracil-5-)-methyltransferase TrmFO from Carboxydothermus hydrogenoformans (strain ATCC BAA-161 / DSM 6008 / Z-2901).